The chain runs to 97 residues: Aspartyl/glutamyl-tRNA(Asn/Gln) amidotransferase subunit C (97 aa).

This sequence belongs to the GatC family. Heterotrimer of A, B and C subunits.

It catalyses the reaction L-glutamyl-tRNA(Gln) + L-glutamine + ATP + H2O = L-glutaminyl-tRNA(Gln) + L-glutamate + ADP + phosphate + H(+). The catalysed reaction is L-aspartyl-tRNA(Asn) + L-glutamine + ATP + H2O = L-asparaginyl-tRNA(Asn) + L-glutamate + ADP + phosphate + 2 H(+). In terms of biological role, allows the formation of correctly charged Asn-tRNA(Asn) or Gln-tRNA(Gln) through the transamidation of misacylated Asp-tRNA(Asn) or Glu-tRNA(Gln) in organisms which lack either or both of asparaginyl-tRNA or glutaminyl-tRNA synthetases. The reaction takes place in the presence of glutamine and ATP through an activated phospho-Asp-tRNA(Asn) or phospho-Glu-tRNA(Gln). The sequence is that of Aspartyl/glutamyl-tRNA(Asn/Gln) amidotransferase subunit C from Anaeromyxobacter sp. (strain K).